A 518-amino-acid polypeptide reads, in one-letter code: Tyrosine/DOPA decarboxylase 1 (518 aa).

The residue at position 321 (Lys321) is an N6-(pyridoxal phosphate)lysine.

This sequence belongs to the group II decarboxylase family. Homodimer. Pyridoxal 5'-phosphate serves as cofactor. As to expression, predominantly expressed in the roots.

It carries out the reaction L-tyrosine + H(+) = tyramine + CO2. It catalyses the reaction L-dopa + H(+) = dopamine + CO2. The enzyme catalyses 5-hydroxy-L-tryptophan + H(+) = serotonin + CO2. In terms of biological role, marginally higher substrate specificity for L-DOPA over L-tyrosine. The protein is Tyrosine/DOPA decarboxylase 1 (TYDC1) of Papaver somniferum (Opium poppy).